A 66-amino-acid chain; its full sequence is Large ribosomal subunit protein bL32 (66 aa).

Belongs to the bacterial ribosomal protein bL32 family.

This is Large ribosomal subunit protein bL32 from Leptospira interrogans serogroup Icterohaemorrhagiae serovar copenhageni (strain Fiocruz L1-130).